The sequence spans 269 residues: Phosphonoacetaldehyde hydrolase (269 aa).

The active-site Nucleophile is the Asp-10. Asp-10 and Ala-12 together coordinate Mg(2+). Lys-52 (schiff-base intermediate with substrate) is an active-site residue. Residue Asp-186 participates in Mg(2+) binding.

It belongs to the HAD-like hydrolase superfamily. PhnX family. In terms of assembly, homodimer. Requires Mg(2+) as cofactor.

The catalysed reaction is phosphonoacetaldehyde + H2O = acetaldehyde + phosphate + H(+). Functionally, involved in phosphonate degradation. This is Phosphonoacetaldehyde hydrolase from Klebsiella pneumoniae subsp. pneumoniae (strain ATCC 700721 / MGH 78578).